Here is a 553-residue protein sequence, read N- to C-terminus: Formate--tetrahydrofolate ligase (553 aa).

63 to 70 (TPAGEGKT) provides a ligand contact to ATP.

Belongs to the formate--tetrahydrofolate ligase family.

It carries out the reaction (6S)-5,6,7,8-tetrahydrofolate + formate + ATP = (6R)-10-formyltetrahydrofolate + ADP + phosphate. The protein operates within one-carbon metabolism; tetrahydrofolate interconversion. The polypeptide is Formate--tetrahydrofolate ligase (Oenococcus oeni (strain ATCC BAA-331 / PSU-1)).